Reading from the N-terminus, the 709-residue chain is G1/S-specific cyclin-E (709 aa).

Disordered stretches follow at residues 1-30, 43-149, 162-205, 221-289, and 642-709; these read MGLN…NGEV, ISSS…NLSS, VDGQ…GSKQ, TVVT…PKHQ, and ALRA…RSNP. Polar residues-rich tracts occupy residues 7–29, 61–70, and 91–106; these read SVCS…SNGE, PSTSFSSASQ, and CDSQ…TSNG. Phosphoserine occurs at positions 114, 115, 117, and 129. A compositionally biased stretch (polar residues) spans 162-175; that stretch reads VDGQSTQELLSIRS. 4 positions are modified to phosphoserine: serine 187, serine 192, serine 195, and serine 198. Pro residues predominate over residues 187–199; sequence SPLPDSPDSPPSP. Residues 228–258 show a composition bias toward acidic residues; that stretch reads EDDDLLDDSCEDYSYDEDDEDDVEEEDDDVE. A compositionally biased stretch (polar residues) spans 260–277; that stretch reads YSSTISPASSGCSQQQAV. Residue threonine 651 is modified to Phosphothreonine. Over residues 677–709 the composition is skewed to low complexity; that stretch reads SSTTTCCNTAASNKGGKSSSNNSVTSCSSRSNP.

It belongs to the cyclin family. Cyclin E subfamily. Interacts with a member of the CDK2/CDK protein kinases to form a serine/threonine kinase holoenzyme complex. The cyclin subunit imparts substrate specificity to the complex. Interacts (via C-terminus) with Z600 (via C-terminus). Isoform II is ubiquitous in early embryos and, prior to mitosis 14, is rapidly degraded in all cells except the pole (germ) cells. Expressed during G1 phase in proliferating peripheral nervous system cells. Constitutive expression in embryonic cycles lacking a G1 phase.

The protein localises to the nucleus. In terms of biological role, essential for the control of the cell cycle at the G1/S (start) transition. Targeted by archipelago for degradation by the SFC ubiquitin ligase complex. The protein is G1/S-specific cyclin-E (CycE) of Drosophila melanogaster (Fruit fly).